The sequence spans 154 residues: Ascorbate-specific PTS system EIIA component (154 aa).

In terms of domain architecture, PTS EIIA type-2 spans 6–150; the sequence is SLAENKSIRL…QEVLDLIDRT (145 aa). His-68 acts as the Tele-phosphohistidine intermediate in catalysis. His-68 is subject to Phosphohistidine.

The protein resides in the cytoplasm. In terms of biological role, the phosphoenolpyruvate-dependent sugar phosphotransferase system (sugar PTS), a major carbohydrate active transport system, catalyzes the phosphorylation of incoming sugar substrates concomitantly with their translocation across the cell membrane. The enzyme II UlaABC PTS system is involved in ascorbate transport. This chain is Ascorbate-specific PTS system EIIA component (ulaC), found in Shigella flexneri.